The following is a 254-amino-acid chain: Imidazole glycerol phosphate synthase subunit HisF (254 aa).

Active-site residues include aspartate 12 and aspartate 131.

This sequence belongs to the HisA/HisF family. In terms of assembly, heterodimer of HisH and HisF.

It is found in the cytoplasm. The enzyme catalyses 5-[(5-phospho-1-deoxy-D-ribulos-1-ylimino)methylamino]-1-(5-phospho-beta-D-ribosyl)imidazole-4-carboxamide + L-glutamine = D-erythro-1-(imidazol-4-yl)glycerol 3-phosphate + 5-amino-1-(5-phospho-beta-D-ribosyl)imidazole-4-carboxamide + L-glutamate + H(+). The protein operates within amino-acid biosynthesis; L-histidine biosynthesis; L-histidine from 5-phospho-alpha-D-ribose 1-diphosphate: step 5/9. IGPS catalyzes the conversion of PRFAR and glutamine to IGP, AICAR and glutamate. The HisF subunit catalyzes the cyclization activity that produces IGP and AICAR from PRFAR using the ammonia provided by the HisH subunit. This Leifsonia xyli subsp. xyli (strain CTCB07) protein is Imidazole glycerol phosphate synthase subunit HisF.